Reading from the N-terminus, the 180-residue chain is Adenosine 5'-phosphosulfate reductase (180 aa).

4 residues coordinate [4Fe-4S] cluster: cysteine 57, cysteine 58, cysteine 140, and cysteine 143. The active-site Nucleophile; cysteine thiosulfonate intermediate is the cysteine 168.

The protein belongs to the PAPS reductase family. CysH subfamily. It depends on [4Fe-4S] cluster as a cofactor.

It localises to the cytoplasm. The enzyme catalyses [thioredoxin]-disulfide + sulfite + AMP + 2 H(+) = adenosine 5'-phosphosulfate + [thioredoxin]-dithiol. Its pathway is sulfur metabolism; hydrogen sulfide biosynthesis; sulfite from sulfate. In terms of biological role, catalyzes the formation of sulfite from adenosine 5'-phosphosulfate (APS) using thioredoxin as an electron donor. This Rhizobium tropici protein is Adenosine 5'-phosphosulfate reductase.